The primary structure comprises 1192 residues: MPRRAGSGQLPLPRGWEEARDYDGKVFYIDHNTRRTSWIDPRDRLTKPLSFADCVGDELPWGWEAGFDPQIGVYYIDHINKTTQIEDPRKQWRGEQEKMLKDYLSVAQDALRTQKELYHVKEQRLALALDEYVRLNDAYKEKSSSHTSLFSGSSSSTKYDPDILKAEISTTRLRVKKLKRELSQMKQELLYKEQGFETLQQIDKKMSGGQSGYELSEAKAILTELKSIRKAISSGEKEKQDLMQSLAKLQERFHLDQNIGRSEPDLRCSPVNSHLCLSRQTLDAGSQTSISGDIGVRSRSNLAEKVRLSLQYEEAKRSMANLKIELSKLDSEAWPGALDIEKEKLMLINEKEELLKELQFVTPQKRTQDELERLEAERQRLEEELLSVRGTPSRALAERLRLEERRKELLQKLEETTKLTTYLHSQLKSLSASTLSMSSGSSLGSLASSRGSLNTSSRGSLNSLSSTELYYSSQSDQIDVDYQYKLDFLLQEKSGYIPSGPITTIHENEVVKSPSQPGQSGLCGVAAAATGHTPPLAEAPKSVASLSSRSSLSSLSPPGSPLVLEGTFPMSSSHDASLHQFTADFEDCELSSHFADISLIENQILLDSDSGGASQSLSEDKDLNECAREPLYEGTADVEKSLPKRRVIHLLGEKTTCVSAAVSDESVAGDSGVYEAFVKQPSEMEDVTYSEEDVAIVETAQVQIGLRYNAKSSSFMVIIAQLRNLHAFLIPHTSKVYFRVAVLPSSTDVSCLFRTKVHPPTESILFNDVFRVAISQTALQQKTLRVDLCSVSKHRREECLAGTQISLADLPFSSEVFTLWYNLLPSKQMPCKKNEENEDSVFQPNQPLVDSIDLDAVSALLARTSAELLAVEQELAQEEEEESGQEEPRGPDGDWLTMLREASDEIVAEKEAEVKLPEDSSCTEDLSSCTSVPEMNEDGNRKESNCAKDLRSQPPTRIPTLVDKETNTDEAANDNMAVRPKERSSLSSRQHPFVRSSVIVRSQTFSPGERNQYICRLNRSDSDSSTLAKKSLFVRNSTERRSLRVKRTVCQSVLRRTTQECPVRTSLDLELDLQASLTRQSRLNDELQALRDLRQKLEELKAQGETDLPPGVLEDERFQRLLKQAEKQAEQSKEEQKQGLNAEKLMRQVSKDVCRLREQSQKVPRQVQSFREKIAYFTRAKISIPSLPADDV.

WW domains follow at residues 10–43 (LPLPRGWEEARDYDGKVFYIDHNTRRTSWIDPRD) and 57–90 (DELPWGWEAGFDPQIGVYYIDHINKTTQIEDPRK). Coiled-coil stretches lie at residues 121 to 194 (KEQR…YKEQ) and 224 to 256 (ELKSIRKAISSGEKEKQDLMQSLAKLQERFHLD). Phosphoserine is present on Ser286. Residues 302–421 (LAEKVRLSLQ…KLEETTKLTT (120 aa)) adopt a coiled-coil conformation. Residues 441–462 (SSLGSLASSRGSLNTSSRGSLN) form a disordered region. Positions 698–821 (ETAQVQIGLR…FSSEVFTLWY (124 aa)) constitute a C2 domain. Residues 859–887 (ALLARTSAELLAVEQELAQEEEEESGQEE) are a coiled coil. 2 disordered regions span residues 873-895 (QELAQEEEEESGQEEPRGPDGDW) and 911-991 (EAEV…SRQH). The span at 875 to 885 (LAQEEEEESGQ) shows a compositional bias: acidic residues. Polar residues predominate over residues 923-933 (TEDLSSCTSVP). Basic and acidic residues predominate over residues 938–951 (DGNRKESNCAKDLR). At Thr1004 the chain carries Phosphothreonine. The residue at position 1022 (Ser1022) is a Phosphoserine. Residues 1031-1050 (SLFVRNSTERRSLRVKRTVC) are interaction with PRKCZ. Residues 1068-1144 (DLELDLQASL…EQKQGLNAEK (77 aa)) are a coiled coil. A compositionally biased stretch (basic and acidic residues) spans 1124-1137 (QAEKQAEQSKEEQK). Positions 1124–1143 (QAEKQAEQSKEEQKQGLNAE) are disordered.

It belongs to the WWC family. As to quaternary structure, forms homodimers and heterodimers with WWC1 and WWC3. Interacts with DLC1 and PRKCZ. Interacts (via WW domains) with LATS1 and LATS2.

The protein localises to the cytoplasm. The protein resides in the cytosol. Its function is as follows. Regulator of the Hippo signaling pathway, also known as the Salvador-Warts-Hippo (SWH) pathway. Enhances phosphorylation of LATS1 and YAP1 and negatively regulates cell proliferation and organ growth due to a suppression of the transcriptional activity of YAP1, the major effector of the Hippo pathway. This Homo sapiens (Human) protein is Protein WWC2.